Consider the following 199-residue polypeptide: NADH-quinone oxidoreductase subunit C (199 aa).

It belongs to the complex I 30 kDa subunit family. As to quaternary structure, NDH-1 is composed of 14 different subunits. Subunits NuoB, C, D, E, F, and G constitute the peripheral sector of the complex.

It localises to the cell inner membrane. It carries out the reaction a quinone + NADH + 5 H(+)(in) = a quinol + NAD(+) + 4 H(+)(out). In terms of biological role, NDH-1 shuttles electrons from NADH, via FMN and iron-sulfur (Fe-S) centers, to quinones in the respiratory chain. The immediate electron acceptor for the enzyme in this species is believed to be ubiquinone. Couples the redox reaction to proton translocation (for every two electrons transferred, four hydrogen ions are translocated across the cytoplasmic membrane), and thus conserves the redox energy in a proton gradient. The polypeptide is NADH-quinone oxidoreductase subunit C (Rhodobacter capsulatus (Rhodopseudomonas capsulata)).